We begin with the raw amino-acid sequence, 450 residues long: Divalent metal cation transporter MntH (450 aa).

The next 11 helical transmembrane spans lie at 34-54 (LSFLGPGLLVAVGYMDPGNWI), 61-81 (AQYGYTLLFVILISSLSAMLL), 108-128 (IAIIFWIIAELAIIATDIAEV), 141-161 (IPLIVGALITVLDVFLLLFIM), 170-190 (AIVGTFIFTVLFIFIFEVYIS), 212-232 (GILYIALGIIGATIMPHNLYL), 263-283 (IQLSIAFVVNCLLLVLGASLF), 305-325 (PVLGATMGAIMSTLFAVALLA), 361-381 (SLAVIPVIVCLIIFKGNAAKI), 383-403 (QLLVFSQVFLSIALPFCLIPL), and 422-442 (VNIISWTLIIILSILNVYLIV).

Belongs to the NRAMP family.

Its subcellular location is the cell membrane. Its function is as follows. H(+)-stimulated, divalent metal cation uptake system. This Staphylococcus aureus (strain Mu3 / ATCC 700698) protein is Divalent metal cation transporter MntH.